A 539-amino-acid chain; its full sequence is Alpha-copaene synthase (539 aa).

Mg(2+) is bound by residues aspartate 290 and aspartate 294. Positions 290, 294, and 432 each coordinate substrate. A DDXXD motif motif is present at residues 290–294 (DDTFD).

This sequence belongs to the terpene synthase family. In terms of assembly, monomer. Requires Mg(2+) as cofactor. It depends on Mn(2+) as a cofactor.

The protein resides in the cytoplasm. The catalysed reaction is (2E,6E)-farnesyl diphosphate = alpha-copaene + diphosphate. The enzyme catalyses (2E,6E)-farnesyl diphosphate = (+)-germacrene D + diphosphate. It carries out the reaction (2E,6E)-farnesyl diphosphate = (-)-(E)-beta-caryophyllene + diphosphate. It catalyses the reaction (2E,6E)-farnesyl diphosphate = delta-cadinene + diphosphate. It participates in secondary metabolite biosynthesis; terpenoid biosynthesis. Functionally, converts farnesyl diphosphate to the bicyclic olefins alpha-copaene, (E)-beta-caryophyllene, and to the macrocyclic sesquiterpene germacrene D. Also mediates the biosynthesis of minor sesquiterpene hydrocarbons including delta-cadinene. Involved in indirect defense by producing volatile signals attracting natural enemies of herbivores. This chain is Alpha-copaene synthase, found in Zea mays (Maize).